The sequence spans 342 residues: Dihydroorotate dehydrogenase (quinone) (342 aa).

FMN-binding positions include 61–65 (AGLDK) and Thr85. Residue Lys65 coordinates substrate. Residue 110–114 (NRMGF) coordinates substrate. 2 residues coordinate FMN: Asn138 and Asn171. Asn171 lines the substrate pocket. Ser174 serves as the catalytic Nucleophile. Substrate is bound at residue Asn176. FMN contacts are provided by Lys216 and Thr244. 245–246 (NT) lines the substrate pocket. Residues Gly267, Gly296, and 317 to 318 (YS) each bind FMN.

Belongs to the dihydroorotate dehydrogenase family. Type 2 subfamily. In terms of assembly, monomer. FMN serves as cofactor.

It localises to the cell membrane. It carries out the reaction (S)-dihydroorotate + a quinone = orotate + a quinol. Its pathway is pyrimidine metabolism; UMP biosynthesis via de novo pathway; orotate from (S)-dihydroorotate (quinone route): step 1/1. Functionally, catalyzes the conversion of dihydroorotate to orotate with quinone as electron acceptor. The protein is Dihydroorotate dehydrogenase (quinone) of Pseudomonas paraeruginosa (strain DSM 24068 / PA7) (Pseudomonas aeruginosa (strain PA7)).